Here is a 545-residue protein sequence, read N- to C-terminus: Ribulokinase (545 aa).

This sequence belongs to the ribulokinase family.

The enzyme catalyses D-ribulose + ATP = D-ribulose 5-phosphate + ADP + H(+). It carries out the reaction L-ribulose + ATP = L-ribulose 5-phosphate + ADP + H(+). The protein operates within carbohydrate degradation; L-arabinose degradation via L-ribulose; D-xylulose 5-phosphate from L-arabinose (bacterial route): step 2/3. In Staphylococcus aureus (strain MRSA252), this protein is Ribulokinase.